The following is a 150-amino-acid chain: Arginine repressor (150 aa).

Belongs to the ArgR family.

It is found in the cytoplasm. It participates in amino-acid biosynthesis; L-arginine biosynthesis [regulation]. Its function is as follows. Regulates arginine biosynthesis genes. This Thermoanaerobacter sp. (strain X514) protein is Arginine repressor.